Consider the following 228-residue polypeptide: uncharacterized protein (228 aa).

The tract at residues 1–34 (MPRDTKPYSRPANAPRPGVKTERSNQFKAASTKY) is disordered.

This is an uncharacterized protein from Orgyia pseudotsugata (Douglas-fir tussock moth).